Consider the following 524-residue polypeptide: Probable malate:quinone oxidoreductase (524 aa).

This sequence belongs to the MQO family. It depends on FAD as a cofactor.

The enzyme catalyses (S)-malate + a quinone = a quinol + oxaloacetate. It participates in carbohydrate metabolism; tricarboxylic acid cycle; oxaloacetate from (S)-malate (quinone route): step 1/1. This chain is Probable malate:quinone oxidoreductase, found in Blochmanniella floridana.